Consider the following 909-residue polypeptide: Protein translocase subunit SecA (909 aa).

ATP-binding positions include Gln-87, 105–109, and Asp-514; that span reads GEGKT. The disordered stretch occupies residues 879–909; that stretch reads TPVQGGPKVGRNDPCPCGSGKKYKHCHGKLS. Cys-893, Cys-895, Cys-904, and His-905 together coordinate Zn(2+). Residues 899-909 are compositionally biased toward basic residues; the sequence is KKYKHCHGKLS.

This sequence belongs to the SecA family. In terms of assembly, monomer and homodimer. Part of the essential Sec protein translocation apparatus which comprises SecA, SecYEG and auxiliary proteins SecDF-YajC and YidC. It depends on Zn(2+) as a cofactor.

It localises to the cell inner membrane. It is found in the cytoplasm. The enzyme catalyses ATP + H2O + cellular proteinSide 1 = ADP + phosphate + cellular proteinSide 2.. Its function is as follows. Part of the Sec protein translocase complex. Interacts with the SecYEG preprotein conducting channel. Has a central role in coupling the hydrolysis of ATP to the transfer of proteins into and across the cell membrane, serving both as a receptor for the preprotein-SecB complex and as an ATP-driven molecular motor driving the stepwise translocation of polypeptide chains across the membrane. The polypeptide is Protein translocase subunit SecA (Azoarcus sp. (strain BH72)).